A 252-amino-acid polypeptide reads, in one-letter code: Protein BTG3 (252 aa).

The tract at residues 138–162 (VTSDYHSGSSSSDEETSKEMEVKPS) is disordered.

It belongs to the BTG family. Ubiquitous. High expression in the ventricular zone of the developing central nervous system. High in ovary, testis, prostate, thymus and lung.

Functionally, overexpression impairs serum-induced cell cycle progression from the G0/G1 to S phase. This Homo sapiens (Human) protein is Protein BTG3 (BTG3).